The sequence spans 191 residues: Prostaglandin-H2 D-isomerase (191 aa).

The signal sequence occupies residues M1–A24. The residue at position 25 (Q25) is a Pyrrolidone carboxylic acid. An N-linked (GlcNAc...) asparagine glycan is attached at N51. The Nucleophile role is filled by C65. An N-linked (GlcNAc...) asparagine glycan is attached at N78. Residues C89 and C186 are joined by a disulfide bond.

This sequence belongs to the calycin superfamily. Lipocalin family. In terms of assembly, monomer. N- and O-glycosylated. Both N-glycosylation recognition sites are almost quantitatively occupied by N-glycans of the biantennary complex type, with a considerable proportion of structures bearing a bisecting GlcNAc. N-glycan at Asn-78: dHex1Hex5HexNAc4. Agalacto structure as well as sialylated and nonsialylated oligosaccharides bearing alpha2-3- and/or alpha2-6-linked NeuNAc are present.

It is found in the rough endoplasmic reticulum. It localises to the nucleus membrane. The protein resides in the golgi apparatus. Its subcellular location is the cytoplasm. The protein localises to the perinuclear region. It is found in the secreted. It carries out the reaction prostaglandin H2 = prostaglandin D2. Functionally, catalyzes the conversion of PGH2 to PGD2, a prostaglandin involved in smooth muscle contraction/relaxation and a potent inhibitor of platelet aggregation. Involved in a variety of CNS functions, such as sedation, NREM sleep and PGE2-induced allodynia, and may have an anti-apoptotic role in oligodendrocytes. Binds small non-substrate lipophilic molecules, including biliverdin, bilirubin, retinal, retinoic acid and thyroid hormone, and may act as a scavenger for harmful hydrophobic molecules and as a secretory retinoid and thyroid hormone transporter. Possibly involved in development and maintenance of the blood-brain, blood-retina, blood-aqueous humor and blood-testis barrier. It is likely to play important roles in both maturation and maintenance of the central nervous system and male reproductive system. Involved in PLA2G3-dependent maturation of mast cells. PLA2G3 is secreted by immature mast cells and acts on nearby fibroblasts upstream to PTDGS to synthesize PGD2, which in turn promotes mast cell maturation and degranulation via PTGDR. This chain is Prostaglandin-H2 D-isomerase (PTGDS), found in Canis lupus familiaris (Dog).